The sequence spans 392 residues: Carbamoyl phosphate synthase small chain (392 aa).

Residues 1–174 are CPSase; it reads MSKKALLALE…EVIVENPEGD (174 aa). 3 residues coordinate L-glutamine: S47, G224, and G226. The Glutamine amidotransferase type-1 domain occupies 176–392; sequence SVVVLDSGVK…EFKRLIKEVR (217 aa). The active-site Nucleophile is the C252. L-glutamine is bound by residues L253, Q256, N294, G296, and F297. Residues H367 and E369 contribute to the active site.

Belongs to the CarA family. In terms of assembly, composed of two chains; the small (or glutamine) chain promotes the hydrolysis of glutamine to ammonia, which is used by the large (or ammonia) chain to synthesize carbamoyl phosphate. Tetramer of heterodimers (alpha,beta)4.

It carries out the reaction hydrogencarbonate + L-glutamine + 2 ATP + H2O = carbamoyl phosphate + L-glutamate + 2 ADP + phosphate + 2 H(+). The enzyme catalyses L-glutamine + H2O = L-glutamate + NH4(+). Its pathway is amino-acid biosynthesis; L-arginine biosynthesis; carbamoyl phosphate from bicarbonate: step 1/1. The protein operates within pyrimidine metabolism; UMP biosynthesis via de novo pathway; (S)-dihydroorotate from bicarbonate: step 1/3. Functionally, small subunit of the glutamine-dependent carbamoyl phosphate synthetase (CPSase). CPSase catalyzes the formation of carbamoyl phosphate from the ammonia moiety of glutamine, carbonate, and phosphate donated by ATP, constituting the first step of 2 biosynthetic pathways, one leading to arginine and/or urea and the other to pyrimidine nucleotides. The small subunit (glutamine amidotransferase) binds and cleaves glutamine to supply the large subunit with the substrate ammonia. This chain is Carbamoyl phosphate synthase small chain, found in Thermotoga maritima (strain ATCC 43589 / DSM 3109 / JCM 10099 / NBRC 100826 / MSB8).